Reading from the N-terminus, the 155-residue chain is Small ribosomal subunit protein uS7cz/uS7cy (155 aa).

Belongs to the universal ribosomal protein uS7 family. In terms of assembly, part of the 30S ribosomal subunit.

Its subcellular location is the plastid. It is found in the chloroplast. Its function is as follows. One of the primary rRNA binding proteins, it binds directly to 16S rRNA where it nucleates assembly of the head domain of the 30S subunit. The chain is Small ribosomal subunit protein uS7cz/uS7cy (rps7-A) from Oenothera argillicola (Appalachian evening primrose).